Here is a 311-residue protein sequence, read N- to C-terminus: tRNA-cytidine(32) 2-sulfurtransferase (311 aa).

Residues 47–52 (SGGKDS) carry the PP-loop motif motif. C122, C125, and C213 together coordinate [4Fe-4S] cluster.

It belongs to the TtcA family. In terms of assembly, homodimer. Mg(2+) is required as a cofactor. [4Fe-4S] cluster serves as cofactor.

The protein resides in the cytoplasm. It catalyses the reaction cytidine(32) in tRNA + S-sulfanyl-L-cysteinyl-[cysteine desulfurase] + AH2 + ATP = 2-thiocytidine(32) in tRNA + L-cysteinyl-[cysteine desulfurase] + A + AMP + diphosphate + H(+). It participates in tRNA modification. Its function is as follows. Catalyzes the ATP-dependent 2-thiolation of cytidine in position 32 of tRNA, to form 2-thiocytidine (s(2)C32). The sulfur atoms are provided by the cysteine/cysteine desulfurase (IscS) system. In Shigella boydii serotype 18 (strain CDC 3083-94 / BS512), this protein is tRNA-cytidine(32) 2-sulfurtransferase.